The primary structure comprises 547 residues: Glucose-6-phosphate isomerase (547 aa).

Catalysis depends on Glu353, which acts as the Proton donor. Active-site residues include His384 and Lys512.

This sequence belongs to the GPI family.

The protein localises to the cytoplasm. It carries out the reaction alpha-D-glucose 6-phosphate = beta-D-fructose 6-phosphate. It participates in carbohydrate biosynthesis; gluconeogenesis. Its pathway is carbohydrate degradation; glycolysis; D-glyceraldehyde 3-phosphate and glycerone phosphate from D-glucose: step 2/4. In terms of biological role, catalyzes the reversible isomerization of glucose-6-phosphate to fructose-6-phosphate. This chain is Glucose-6-phosphate isomerase, found in Pseudoalteromonas atlantica (strain T6c / ATCC BAA-1087).